A 598-amino-acid polypeptide reads, in one-letter code: Serine hydroxymethyltransferase 7 (598 aa).

Residues 57–85 form a disordered region; it reads QLLEQKAEKTTTVDEPKKDGGGGGDQKED. Basic and acidic residues predominate over residues 61-85; that stretch reads QKAEKTTTVDEPKKDGGGGGDQKED. Lys-370 is modified (N6-(pyridoxal phosphate)lysine).

This sequence belongs to the SHMT family. As to quaternary structure, homotetramer. Pyridoxal 5'-phosphate serves as cofactor.

It localises to the cytoplasm. The enzyme catalyses (6R)-5,10-methylene-5,6,7,8-tetrahydrofolate + glycine + H2O = (6S)-5,6,7,8-tetrahydrofolate + L-serine. The protein operates within one-carbon metabolism; tetrahydrofolate interconversion. Catalyzes the interconversion of serine and glycine. This is Serine hydroxymethyltransferase 7 (SHM7) from Arabidopsis thaliana (Mouse-ear cress).